A 521-amino-acid chain; its full sequence is Vang-like protein 2 (521 aa).

Positions 1 to 81 are disordered; it reads MDTESQYSGY…TTVVTGTSEH (81 aa). The Cytoplasmic segment spans residues 1–108; that stretch reads MDTESQYSGY…VPLDCSRHLG (108 aa). A compositionally biased stretch (basic residues) spans 15 to 33; it reads GHSRSSRKHRDRRDRHRSK. Positions 57–67 are enriched in basic and acidic residues; the sequence is ESTRGDERDDN. Residues 69-81 are compositionally biased toward low complexity; it reads GETTTVVTGTSEH. Residues 109 to 129 traverse the membrane as a helical segment; the sequence is VAAGATLALLSFLTPLAFLLL. The Extracellular portion of the chain corresponds to 130–147; it reads PPLLWREELEPCGTACEG. Residues 148–168 form a helical membrane-spanning segment; it reads LFISVAFKLLILLLGSWALFF. At 169–178 the chain is on the cytoplasmic side; the sequence is RRPKASLPRV. The chain crosses the membrane as a helical span at residues 179 to 199; it reads FVLRALLMVLVFLLVVSYWLF. Residues 200-217 are Extracellular-facing; the sequence is YGVRILDARERSYQGVVQ. A helical membrane pass occupies residues 218–238; that stretch reads FAVSLVDALLFVHYLAVVLLE. The Cytoplasmic portion of the chain corresponds to 239–521; sequence LRQLQPQFTL…VMRLQSETSV (283 aa).

The protein belongs to the Vang family. As to quaternary structure, homodimer and heterodimer with VANGL1. Interacts through its C-terminal region with the N-terminal half of DVL1, DVL2 and DVL3. The PDZ domain of DVL1, DVL2 and DVL3 is required for the interaction. Also interacts with the PDZ domains of MAGI3, SCRIB/SCRB1 and FZD3. Interacts with PRICKLE3.

It is found in the cell membrane. Functionally, involved in the control of early morphogenesis and patterning of both axial midline structures and the development of neural plate. Plays a role in the regulation of planar cell polarity, particularly in the orientation of stereociliary bundles in the cochlea. Required for polarization and movement of myocardializing cells in the outflow tract and seems to act via RHOA signaling to regulate this process. Required for cell surface localization of FZD3 and FZD6 in the inner ear. In Homo sapiens (Human), this protein is Vang-like protein 2 (VANGL2).